Reading from the N-terminus, the 91-residue chain is Small ribosomal subunit protein uS15 (91 aa).

The protein belongs to the universal ribosomal protein uS15 family. As to quaternary structure, part of the 30S ribosomal subunit. Forms a bridge to the 50S subunit in the 70S ribosome, contacting the 23S rRNA.

Functionally, one of the primary rRNA binding proteins, it binds directly to 16S rRNA where it helps nucleate assembly of the platform of the 30S subunit by binding and bridging several RNA helices of the 16S rRNA. Its function is as follows. Forms an intersubunit bridge (bridge B4) with the 23S rRNA of the 50S subunit in the ribosome. In Rickettsia peacockii (strain Rustic), this protein is Small ribosomal subunit protein uS15.